Consider the following 401-residue polypeptide: uncharacterized protein (401 aa).

The next 10 helical transmembrane spans lie at 20–40 (FFGELLTSLTGAMMGPFMVLY), 49–69 (IMMPMLIISLQPFADIFLTLA), 83–100 (ILTALLLQSAAMTGFVFA), 104–121 (YVFAILYVMNGIGRSLYI), 140–160 (VFAVINAIYSTGLTAGPLVGM), 167–187 (PVWIFALDAAALFIYFLIAAL), 207–227 (FTIYRPVLLLLLLSLPISMLY), 248–268 (MLTIYSAAKALFSCVLQVPLV), 289–309 (LAAAGFACSTSLTMLLVTAAV), and 357–377 (GLILTSFGGEVIFYALAVCLL).

It belongs to the major facilitator superfamily.

The protein resides in the cell membrane. This is an uncharacterized protein from Bacillus subtilis (strain 168).